The following is a 690-amino-acid chain: Serotransferrin-1 (690 aa).

The first 18 residues, 1-18 (MKLLLLSALLGCLATAYA), serve as a signal peptide directing secretion. 2 Transferrin-like domains span residues 25–329 (VKWC…SLKK) and 340–669 (IKWC…SLRK). An intrachain disulfide couples Cys28 to Cys50. Residues Asp74 and Tyr104 each coordinate Fe(3+). Cystine bridges form between Cys127–Cys207, Cys172–Cys186, and Cys235–Cys249. Residues Thr129, Ser134, Gly136, and Trp137 each coordinate hydrogencarbonate. The N-linked (GlcNAc...) asparagine glycan is linked to Asn169. Tyr201 serves as a coordination point for Fe(3+). Position 257 (His257) interacts with Fe(3+). Disulfide bonds link Cys343-Cys379 and Cys353-Cys370. Asp394 and Tyr428 together coordinate Fe(3+). Cystine bridges form between Cys404/Cys681, Cys419/Cys642, Cys451/Cys529, Cys475/Cys670, Cys485/Cys499, Cys496/Cys512, and Cys569/Cys583. Hydrogencarbonate is bound by residues Thr453, Arg457, Ala459, and Gly460. Position 523 (Tyr523) interacts with Fe(3+). Residue His591 participates in Fe(3+) binding.

The protein belongs to the transferrin family. In terms of assembly, monomer. As to expression, abundant in liver and serum with smaller amounts found in the stomach and kidney.

It is found in the secreted. Its function is as follows. Transferrins are iron binding transport proteins which can bind two Fe(3+) ions in association with the binding of an anion, usually bicarbonate. It is responsible for the transport of iron from sites of absorption and heme degradation to those of storage and utilization. Serum transferrin may also have a further role in stimulating cell proliferation. In Salmo salar (Atlantic salmon), this protein is Serotransferrin-1 (tf1).